The sequence spans 455 residues: Serine--tRNA ligase (455 aa).

Residue 252–254 (TAE) coordinates L-serine. ATP contacts are provided by residues 283 to 285 (RKE) and Val299. Glu306 lines the L-serine pocket. Position 370–373 (370–373 (EVVS)) interacts with ATP. Residue Thr406 coordinates L-serine.

It belongs to the class-II aminoacyl-tRNA synthetase family. Type-1 seryl-tRNA synthetase subfamily. As to quaternary structure, homodimer. The tRNA molecule binds across the dimer.

The protein resides in the cytoplasm. It carries out the reaction tRNA(Ser) + L-serine + ATP = L-seryl-tRNA(Ser) + AMP + diphosphate + H(+). It catalyses the reaction tRNA(Sec) + L-serine + ATP = L-seryl-tRNA(Sec) + AMP + diphosphate + H(+). Its pathway is aminoacyl-tRNA biosynthesis; selenocysteinyl-tRNA(Sec) biosynthesis; L-seryl-tRNA(Sec) from L-serine and tRNA(Sec): step 1/1. In terms of biological role, catalyzes the attachment of serine to tRNA(Ser). Is also able to aminoacylate tRNA(Sec) with serine, to form the misacylated tRNA L-seryl-tRNA(Sec), which will be further converted into selenocysteinyl-tRNA(Sec). This Thermococcus gammatolerans (strain DSM 15229 / JCM 11827 / EJ3) protein is Serine--tRNA ligase.